The sequence spans 68 residues: ATP synthase F(0) complex subunit 8 (68 aa).

The helical transmembrane segment at 8 to 24 (TWFTIIMAMLPTLYLIT) threads the bilayer. N6-acetyllysine; alternate is present on Lys54. Lys54 is subject to N6-succinyllysine; alternate. Position 57 is an N6-acetyllysine (Lys57).

This sequence belongs to the ATPase protein 8 family. Component of the ATP synthase complex composed at least of ATP5F1A/subunit alpha, ATP5F1B/subunit beta, ATP5MC1/subunit c (homooctomer), MT-ATP6/subunit a, MT-ATP8/subunit 8, ATP5ME/subunit e, ATP5MF/subunit f, ATP5MG/subunit g, ATP5MK/subunit k, ATP5MJ/subunit j, ATP5F1C/subunit gamma, ATP5F1D/subunit delta, ATP5F1E/subunit epsilon, ATP5PF/subunit F6, ATP5PB/subunit b, ATP5PD/subunit d, ATP5PO/subunit OSCP. ATP synthase complex consists of a soluble F(1) head domain (subunits alpha(3) and beta(3)) - the catalytic core - and a membrane F(0) domain - the membrane proton channel (subunits c, a, 8, e, f, g, k and j). These two domains are linked by a central stalk (subunits gamma, delta, and epsilon) rotating inside the F1 region and a stationary peripheral stalk (subunits F6, b, d, and OSCP). Interacts with PRICKLE3.

The protein localises to the mitochondrion membrane. Its function is as follows. Subunit 8, of the mitochondrial membrane ATP synthase complex (F(1)F(0) ATP synthase or Complex V) that produces ATP from ADP in the presence of a proton gradient across the membrane which is generated by electron transport complexes of the respiratory chain. ATP synthase complex consist of a soluble F(1) head domain - the catalytic core - and a membrane F(1) domain - the membrane proton channel. These two domains are linked by a central stalk rotating inside the F(1) region and a stationary peripheral stalk. During catalysis, ATP synthesis in the catalytic domain of F(1) is coupled via a rotary mechanism of the central stalk subunits to proton translocation. In vivo, can only synthesize ATP although its ATP hydrolase activity can be activated artificially in vitro. Part of the complex F(0) domain. The sequence is that of ATP synthase F(0) complex subunit 8 from Papio hamadryas (Hamadryas baboon).